The following is a 2058-amino-acid chain: MDNFFTEGTRVWLRENGQHFPSTVNSCAEGIVVFRTDYGQVFTYKQSTITHQKVTAMHPTNEEGVDDMASLTELHGGSIMYNLFQRYKRNQIYTYIGSILASVNPYQPIAGLYEPATMEQYSRRHLGELPPHIFAIANECYRCLWKRHDNQCILISGESGAGKTESTKLILKFLSVISQQSLELSLKEKTSCVERAILESSPIMEAFGNAKTVYNNNSSRFGKFVQLNICQKGNIQGGRIVDYLLEKNRVVRQNPGERNYHIFYALLAGLEHEEREEFYLSTPENYHYLNQSGCVEDKTISDQESFREVITAMDVMQFSKEEVREVSRLLAGILHLGNIEFITAGGAQVSFKTALGRSAELLGLDPTQLTDALTQRSMFLRGEEILTPLNVQQAVDSRDSLAMALYACCFEWVIKKINSRIKGNEDFKSIGILDIFGFENFEVNHFEQFNINYANEKLQEYFNKHIFSLEQLEYSREGLVWEDIDWIDNGECLDLIEKKLGLLALINEESHFPQATDSTLLEKLHSQHANNHFYVKPRVAVNNFGVKHYAGEVQYDVRGILEKNRDTFRDDLLNLLRESRFDFIYDLFEHVSSRNNQDTLKCGSKHRRPTVSSQFKDSLHSLMATLSSSNPFFVRCIKPNMQKMPDQFDQAVVLNQLRYSGMLETVRIRKAGYAVRRPFQDFYKRYKVLMRNLALPEDVRGKCTSLLQLYDASNSEWQLGKTKVFLRESLEQKLEKRREEEVSHAAMVIRAHVLGFLARKQYRKVLYCVVIIQKNYRAFLLRRRFLHLKKAAIVFQKQLRGQIARRVYRQLLAEKREQEEKKKQEEEEKKKREEEERERERERREAELRAQQEEETRKQQELEALQKSQKEAELTRELEKQKENKQVEEILRLEKEIEDLQRMKEQQELSLTEASLQKLQERRDQELRRLEEEACRAAQEFLESLNFDEIDECVRNIERSLSVGSEFSSELAESACEEKPNFNFSQPYPEEEVDEGFEADDDAFKDSPNPSEHGHSDQRTSGIRTSDDSSEEDPYMNDTVVPTSPSADSTVLLAPSVQDSGSLHNSSSGESTYCMPQNAGDLPSPDGDYDYDQDDYEDGAITSGSSVTFSNSYGSQWSPDYRCSVGTYNSSGAYRFSSEGAQSSFEDSEEDFDSRFDTDDELSYRRDSVYSCVTLPYFHSFLYMKGGLMNSWKRRWCVLKDETFLWFRSKQEALKQGWLHKKGGGSSTLSRRNWKKRWFVLRQSKLMYFENDSEEKLKGTVEVRTAKEIIDNTTKENGIDIIMADRTFHLIAESPEDASQWFSVLSQVHASTDQEIQEMHDEQANPQNAVGTLDVGLIDSVCASDSPDRPNSFVIITANRVLHCNADTPEEMHHWITLLQRSKGDTRVEGQEFIVRGWLHKEVKNSPKMSSLKLKKRWFVLTHNSLDYYKSSEKNALKLGTLVLNSLCSVVPPDEKIFKETGYWNVTVYGRKHCYRLYTKLLNEATRWSSAIQNVTDTKAPIDTPTQQLIQDIKENCLNSDVVEQIYKRNPILRYTHHPLHSPLLPLPYGDINLNLLKDKGYTTLQDEAIKIFNSLQQLESMSDPIPIIQGILQTGHDLRPLRDELYCQLIKQTNKVPHPGSVGNLYSWQILTCLSCTFLPSRGILKYLKFHLKRIREQFPGSEMEKYALFTYESLKKTKCREFVPSRDEIEALIHRQEMTSTVYCHGGGSCKITINSHTTAGEVVEKLIRGLAMEDSRNMFALFEYNGHVDKAIESRTVVADVLAKFEKLAATSEVGDLPWKFYFKLYCFLDTDNVPKDSVEFAFMFEQAHEAVIHGHHPAPEENLQVLAALRLQYLQGDYTLHAAIPPLEEVYSLQRLKARISQSTKTFTPCERLEKRRTSFLEGTLRRSFRTGSVVRQKVEEEQMLDMWIKEEVSSARASIIDKWRKFQGMNQEQAMAKYMALIKEWPGYGSTLFDVECKEGGFPQELWLGVSADAVSVYKRGEGRPLEVFQYEHILSFGAPLANTYKIVVDERELLFETSEVVDVAKLMKAYISMIVKKRYSTTRSASSQGSSR.

The residue at position 1 (Met1) is an N-acetylmethionine. The Myosin motor domain maps to 63-739 (EGVDDMASLT…LEQKLEKRRE (677 aa)). Residues Asn104, Tyr113, 160 to 165 (GAGKTE), and Asn215 each bind ATP. The actin-binding stretch occupies residues 619–641 (LHSLMATLSSSNPFFVRCIKPNM). 3 IQ domains span residues 742–763 (VSHA…KQYR), 764–787 (KVLY…RFLH), and 788–817 (LKKA…EKRE). Residues 814-883 (EKREQEEKKK…LTRELEKQKE (70 aa)) are SAH. Disordered stretches follow at residues 819–840 (EEKK…RERE) and 847–866 (ELRA…EALQ). Residues 847–861 (ELRAQQEEETRKQQE) are compositionally biased toward basic and acidic residues. The stretch at 884–934 (NKQVEEILRLEKEIEDLQRMKEQQELSLTEASLQKLQERRDQELRRLEEEA) forms a coiled coil. Phosphoserine occurs at positions 962, 965, and 968. A disordered region spans residues 964 to 1090 (GSEFSSELAE…DLPSPDGDYD (127 aa)). Residues 989 to 1003 (PEEEVDEGFEADDDA) show a composition bias toward acidic residues. Residues 1040-1049 (VVPTSPSADS) are compositionally biased toward polar residues. The segment covering 1060–1071 (SGSLHNSSSGES) has biased composition (low complexity). Thr1158 is modified (phosphothreonine). PH domains follow at residues 1212–1310 (EALK…QVHA) and 1392–1497 (EFIV…NVTD). The MyTH4 domain maps to 1547 to 1695 (LPYGDINLNL…PSRDEIEALI (149 aa)). The region spanning 1700-2044 (MTSTVYCHGG…AYISMIVKKR (345 aa)) is the FERM domain.

The protein belongs to the TRAFAC class myosin-kinesin ATPase superfamily. Myosin family. Monomer, when in an inactive conformation in the cytosol. Homodimer in its active, membrane-bound conformation; antiparallel coiled coil-mediated dimer formation. Interacts strongly with CALM3 and weakly with CALM, the CALM3 interaction is essential for function in filopodial extension and motility. Interacts with ECPAS. Interacts with NEO1. Interacts with ITGB1 and ITGB3. Interacts with VASP. Interacts with DCC and ITGB5; the presence of DCC inhibits ITGB5 binding. Interacts with tubulin; ITGB5 or DCC binding inhibits tubulin binding. The initiator methionine for isoform Headless is removed. Ubiquitous.

The protein localises to the cytoplasm. Its subcellular location is the cytosol. The protein resides in the cell projection. It is found in the lamellipodium. It localises to the ruffle. The protein localises to the cytoskeleton. Its subcellular location is the filopodium tip. The protein resides in the cell cortex. It is found in the filopodium membrane. Its function is as follows. Myosins are actin-based motor molecules with ATPase activity. Unconventional myosins serve in intracellular movements. MYO10 binds to actin filaments and actin bundles and functions as a plus end-directed motor. Moves with higher velocity and takes larger steps on actin bundles than on single actin filaments. The tail domain binds to membranous compartments containing phosphatidylinositol 3,4,5-trisphosphate or integrins, and mediates cargo transport along actin filaments. Regulates cell shape, cell spreading and cell adhesion. Stimulates the formation and elongation of filopodia. In hippocampal neurons it induces the formation of dendritic filopodia by trafficking the actin-remodeling protein VASP to the tips of filopodia, where it promotes actin elongation. Plays a role in formation of the podosome belt in osteoclasts. In terms of biological role, functions as a dominant-negative regulator of isoform 1, suppressing its filopodia-inducing and axon outgrowth-promoting activities. In hippocampal neurons, it increases VASP retention in spine heads to induce spine formation and spine head expansion. The protein is Unconventional myosin-X (MYO10) of Homo sapiens (Human).